Reading from the N-terminus, the 804-residue chain is MTGSFWLLLSLVAVTAAQSTTEEQAKTFLEKFNHEAEDLSYQSSLASWNYNTNITDENVQKMNEARAKWSAFYEEQSRMAKTYSLEEIQNLTLKRQLKALQHSGTSALSAEKSKRLNTILNKMSTIYSTGKVLDPNTQECLALEPGLDDIMENSRDYNRRLWAWEGWRAEVGKQLRPLYEEYVVLENEMARANNYEDYGDYWRGDYEVTGAGDYDYSRDQLMKDVERTFAEIKPLYEQLHAYVRAKLMHTYPSYISPTGCLPAHLLGDMWGRFWTNLYSLTVPFEHKPSIDVTEKMENQSWDAERIFKEAEKFFVSISLPYMTQGFWDNSMLTEPGDGRKVVCHPTAWDLGKGDFRIKMCTKVTMDDFLTAHHEMGHIQYDMAYAAQPYLLRNGANEGFHEAVGEIMSLSAATPHYLKALGLLAPDFHEDNETEINFLLKQALTIVGTLPFTYMLEKWRWMVFKGEIPKQQWMEKWWEMKREIVGVVEPLPHDETYCDPACLFHVAEDYSFIRYYTRTIYQFQFHEALCKTAKHEGALFKCDISNSTEAGQRLLQMLRLGKSEPWTLALENIVGIKTMDVKPLLNYFEPLFTWLKEQNRNSFVGWSTEWTPYSDQSIKVRISLKSALGENAYEWNDNEMYLFQSSVAYAMRKYFSEARNETVLFGEDNVWVSDKKPRISFKFFVTSPNNVSDIIPRTEVENAIRLSRDRINDVFQLDDNSLEFLGIQPTLGPPYEPPVTIWLIIFGVVMGVVVIGIVVLIFTGIRNRRKKNQASSEENPYGSVDLNKGENNSGFQNIDDVQTSL.

The first 17 residues, 1 to 17 (MTGSFWLLLSLVAVTAA), serve as a signal peptide directing secretion. At 18–739 (QSTTEEQAKT…LGPPYEPPVT (722 aa)) the chain is on the extracellular side. The Peptidase M2 domain occupies 19-606 (STTEEQAKTF…QNRNSFVGWS (588 aa)). N-linked (GlcNAc...) asparagine glycans are attached at residues asparagine 53 and asparagine 90. Arginine 168 contributes to the chloride binding site. A substrate-binding site is contributed by arginine 272. N-linked (GlcNAc...) asparagine glycosylation occurs at asparagine 298. A disulfide bridge connects residues cysteine 343 and cysteine 360. Substrate is bound at residue 344 to 345 (HP). Position 373 (histidine 373) interacts with Zn(2+). Glutamate 374 functions as the Proton acceptor in the catalytic mechanism. Residues histidine 377 and glutamate 401 each contribute to the Zn(2+) site. Asparagine 431 carries an N-linked (GlcNAc...) asparagine glycan. Chloride contacts are provided by tryptophan 476 and lysine 480. Catalysis depends on histidine 504, which acts as the Proton donor. Tyrosine 514 contacts substrate. A disulfide bridge links cysteine 529 with cysteine 541. Asparagine 545 carries N-linked (GlcNAc...) asparagine glycosylation. The Collectrin-like domain maps to 613–804 (SDQSIKVRIS…QNIDDVQTSL (192 aa)). The interval 651–658 (RKYFSEAR) is essential for cleavage by ADAM17. N-linked (GlcNAc...) asparagine glycosylation is found at asparagine 659 and asparagine 689. Residues 696–715 (RTEVENAIRLSRDRINDVFQ) are essential for cleavage by TMPRSS11D and TMPRSS2. Residues 740–760 (IWLIIFGVVMGVVVIGIVVLI) traverse the membrane as a helical segment. Residues 761 to 804 (FTGIRNRRKKNQASSEENPYGSVDLNKGENNSGFQNIDDVQTSL) are Cytoplasmic-facing. The tract at residues 771–804 (NQASSEENPYGSVDLNKGENNSGFQNIDDVQTSL) is disordered. Residues 777-785 (ENPYGSVDL) carry the LIR motif. Tyrosine 780 carries the post-translational modification Phosphotyrosine. Residues 780 to 783 (YGSV) carry the Endocytic sorting signal motif. The short motif at 780 to 784 (YGSVD) is the SH2-binding element. Serine 782 is subject to Phosphoserine. A Glycyl lysine isopeptide (Lys-Gly) (interchain with G-Cter in ubiquitin) cross-link involves residue lysine 787. Over residues 788-804 (GENNSGFQNIDDVQTSL) the composition is skewed to polar residues. The short motif at 791–794 (NSGF) is the PTB element. The short motif at 802–804 (TSL) is the PDZ-binding element.

Belongs to the peptidase M2 family. In terms of assembly, homodimer. Interacts with the catalytically active form of TMPRSS2. Interacts with SLC6A19; this interaction is essential for expression and function of SLC6A19 in intestine. Interacts with ITGA5:ITGB1. Probably interacts (via endocytic sorting signal motif) with AP2M1; the interaction is inhibited by phosphorylation of Tyr-780. Interacts (via PDZ-binding motif) with NHERF1 (via PDZ domains); the interaction may enhance ACE2 membrane residence. Zn(2+) is required as a cofactor. Chloride serves as cofactor. Post-translationally, proteolytic cleavage by ADAM17 generates a secreted form. Also cleaved by serine proteases: TMPRSS2, TMPRSS11D and HPN/TMPRSS1. Phosphorylated. Phosphorylation at Tyr-780 probably inhibits interaction with AP2M1 and enables interactions with proteins containing SH2 domains. In terms of processing, ubiquitinated. Ubiquitinated on Lys-787 via 'Lys-48'-linked ubiquitin. 'Lys-48'-linked deubiquitinated by USP50 on the Lys-787; leading to its stabilization.

The protein localises to the secreted. It is found in the cell membrane. It localises to the cytoplasm. The protein resides in the cell projection. Its subcellular location is the cilium. The protein localises to the apical cell membrane. The enzyme catalyses angiotensin II + H2O = angiotensin-(1-7) + L-phenylalanine. It carries out the reaction angiotensin I + H2O = angiotensin-(1-9) + L-leucine. It catalyses the reaction bradykinin(1-8) + H2O = bradykinin(1-7) + L-phenylalanine. The catalysed reaction is neurotensin + H2O = neurotensin-(1-12) + L-leucine. The enzyme catalyses kinetensin + H2O = kinetensin-(1-8) + L-leucine. It carries out the reaction dynorphin A-(1-13) + H2O = dynorphin A-(1-12) + L-lysine. It catalyses the reaction apelin-13 + H2O = apelin-12 + L-phenylalanine. The catalysed reaction is [Pyr1]apelin-13 + H2O = [Pyr1]apelin-12 + L-phenylalanine. The enzyme catalyses apelin-17 + H2O = apelin-16 + L-phenylalanine. Functionally, essential counter-regulatory carboxypeptidase of the renin-angiotensin hormone system that is a critical regulator of blood volume, systemic vascular resistance, and thus cardiovascular homeostasis. Converts angiotensin I to angiotensin 1-9, a nine-amino acid peptide with anti-hypertrophic effects in cardiomyocytes, and angiotensin II to angiotensin 1-7, which then acts as a beneficial vasodilator and anti-proliferation agent, counterbalancing the actions of the vasoconstrictor angiotensin II. Also removes the C-terminal residue from three other vasoactive peptides, neurotensin, kinetensin, and des-Arg bradykinin, but is not active on bradykinin. Also cleaves other biological peptides, such as apelins, casomorphins and dynorphin A. Plays an important role in amino acid transport by acting as binding partner of amino acid transporter SLC6A19 in intestine, regulating trafficking, expression on the cell surface, and its catalytic activity. This Bos taurus (Bovine) protein is Angiotensin-converting enzyme 2 (ACE2).